The following is a 333-amino-acid chain: Anthranilate phosphoribosyltransferase (333 aa).

5-phospho-alpha-D-ribose 1-diphosphate-binding positions include G81, 84–85 (GD), T89, 91–94 (NIST), 109–117 (KHGNRSVSS), and S121. Anthranilate is bound at residue G81. S93 is a Mg(2+) binding site. Residue N112 coordinates anthranilate. R167 contacts anthranilate. Positions 225 and 226 each coordinate Mg(2+).

It belongs to the anthranilate phosphoribosyltransferase family. Homodimer. Mg(2+) is required as a cofactor.

It carries out the reaction N-(5-phospho-beta-D-ribosyl)anthranilate + diphosphate = 5-phospho-alpha-D-ribose 1-diphosphate + anthranilate. The protein operates within amino-acid biosynthesis; L-tryptophan biosynthesis; L-tryptophan from chorismate: step 2/5. Catalyzes the transfer of the phosphoribosyl group of 5-phosphorylribose-1-pyrophosphate (PRPP) to anthranilate to yield N-(5'-phosphoribosyl)-anthranilate (PRA). The sequence is that of Anthranilate phosphoribosyltransferase from Glaesserella parasuis serovar 5 (strain SH0165) (Haemophilus parasuis).